The sequence spans 590 residues: Sulfoacetaldehyde acetyltransferase (590 aa).

This sequence belongs to the TPP enzyme family. The cofactor is Mg(2+). Requires thiamine diphosphate as cofactor.

The protein localises to the cytoplasm. The catalysed reaction is acetyl phosphate + sulfite + H(+) = sulfoacetaldehyde + phosphate. Its pathway is organosulfur degradation; taurine degradation via aerobic pathway; acetyl phosphate and sulfite from taurine: step 2/2. The sequence is that of Sulfoacetaldehyde acetyltransferase from Rhodobacter capsulatus (strain ATCC BAA-309 / NBRC 16581 / SB1003).